The following is a 41-amino-acid chain: Large ribosomal subunit protein bL36 (41 aa).

Belongs to the bacterial ribosomal protein bL36 family.

The protein is Large ribosomal subunit protein bL36 of Methylobacterium nodulans (strain LMG 21967 / CNCM I-2342 / ORS 2060).